The chain runs to 306 residues: 1-aminocyclopropane-1-carboxylate oxidase (306 aa).

The 101-residue stretch at 153 to 253 folds into the Fe2OG dioxygenase domain; it reads PFFGTKVSHY…RRSIASFYNP (101 aa). The Fe cation site is built by His177, Asp179, and His234.

It belongs to the iron/ascorbate-dependent oxidoreductase family. Fe cation serves as cofactor.

It carries out the reaction 1-aminocyclopropane-1-carboxylate + L-ascorbate + O2 = ethene + L-dehydroascorbate + hydrogen cyanide + CO2 + 2 H2O. Its pathway is alkene biosynthesis; ethylene biosynthesis via S-adenosyl-L-methionine; ethylene from S-adenosyl-L-methionine: step 2/2. This Musa acuminata (Banana) protein is 1-aminocyclopropane-1-carboxylate oxidase (MAO1B).